A 479-amino-acid chain; its full sequence is Aspartyl/glutamyl-tRNA(Asn/Gln) amidotransferase subunit B (479 aa).

It belongs to the GatB/GatE family. GatB subfamily. Heterotrimer of A, B and C subunits.

The enzyme catalyses L-glutamyl-tRNA(Gln) + L-glutamine + ATP + H2O = L-glutaminyl-tRNA(Gln) + L-glutamate + ADP + phosphate + H(+). The catalysed reaction is L-aspartyl-tRNA(Asn) + L-glutamine + ATP + H2O = L-asparaginyl-tRNA(Asn) + L-glutamate + ADP + phosphate + 2 H(+). Functionally, allows the formation of correctly charged Asn-tRNA(Asn) or Gln-tRNA(Gln) through the transamidation of misacylated Asp-tRNA(Asn) or Glu-tRNA(Gln) in organisms which lack either or both of asparaginyl-tRNA or glutaminyl-tRNA synthetases. The reaction takes place in the presence of glutamine and ATP through an activated phospho-Asp-tRNA(Asn) or phospho-Glu-tRNA(Gln). The chain is Aspartyl/glutamyl-tRNA(Asn/Gln) amidotransferase subunit B from Streptococcus uberis (strain ATCC BAA-854 / 0140J).